Reading from the N-terminus, the 249-residue chain is Coproheme decarboxylase (249 aa).

Fe-coproporphyrin III-binding positions include arginine 131, 145–149 (YPMNK), histidine 172, and glutamine 185. Tyrosine 145 is a catalytic residue.

This sequence belongs to the ChdC family. Type 1 subfamily. It depends on Fe-coproporphyrin III as a cofactor.

The catalysed reaction is Fe-coproporphyrin III + 2 H2O2 + 2 H(+) = heme b + 2 CO2 + 4 H2O. It catalyses the reaction Fe-coproporphyrin III + H2O2 + H(+) = harderoheme III + CO2 + 2 H2O. The enzyme catalyses harderoheme III + H2O2 + H(+) = heme b + CO2 + 2 H2O. It participates in porphyrin-containing compound metabolism; protoheme biosynthesis. Its function is as follows. Involved in coproporphyrin-dependent heme b biosynthesis. Catalyzes the decarboxylation of Fe-coproporphyrin III (coproheme) to heme b (protoheme IX), the last step of the pathway. The reaction occurs in a stepwise manner with a three-propionate intermediate. The protein is Coproheme decarboxylase of Staphylococcus carnosus (strain TM300).